The primary structure comprises 122 residues: Small ribosomal subunit protein uS13 (122 aa).

Positions 95 to 122 (GLPVRGQRTHTNARTRKGPRRGTVGKKK) are disordered.

This sequence belongs to the universal ribosomal protein uS13 family. As to quaternary structure, part of the 30S ribosomal subunit. Forms a loose heterodimer with protein S19. Forms two bridges to the 50S subunit in the 70S ribosome.

Functionally, located at the top of the head of the 30S subunit, it contacts several helices of the 16S rRNA. In the 70S ribosome it contacts the 23S rRNA (bridge B1a) and protein L5 of the 50S subunit (bridge B1b), connecting the 2 subunits; these bridges are implicated in subunit movement. Contacts the tRNAs in the A and P-sites. The sequence is that of Small ribosomal subunit protein uS13 from Nitratidesulfovibrio vulgaris (strain ATCC 29579 / DSM 644 / CCUG 34227 / NCIMB 8303 / VKM B-1760 / Hildenborough) (Desulfovibrio vulgaris).